The primary structure comprises 677 residues: MDDTEGNSSMDSIRNGQSSPLPQVTPRLPQIPMMMRETPLSTKRERQAITPRFRRPAPKMIKTMPPTRSIWSVRKESVPLLVTPQGPKPLESPKYDHTNAQSFFEQVFQIDEIIGRGSFGEVFAARCREDSQLYAVKVSLAPIRQHSISKYREAESHMIIPPHKNLVKFYRAWEETGRLYIQTELCDQSLLKYCTEKHALPEDEIWNIFVDLLQAVHHLHSNDMIHDDIKPENIFLTKDMICKLGDFGLVINLKNPNDVKSAEEGDSKYLAPEVLNGRPTKSSDIFSLGMTILEATTDLDVPSNGDSWHQIRNGQIPDRFFAGISTDLRSLIALMLDSDPRIRPTSRDLLDHPVIKKKLMKRGTYVKCISILNGFFYAFSAVLVWVMAFFSVLFHPIVRFHAAIKDRQSEICAQFVNNQQHTPIQTPETSKVYLESLTGVAVRQASQIVSPFDFSDDENPPNAQRRLFTGAVPCRLNFDNDQDDDEEQATCSSSNSSAIEPQLDEPESPPRMNDVIDKLGKRGTPRSARRNLTFNRHRQVAASVAPKSSLNHYNHHTGSGDGFSNNSLIPISDQERTEKYLRMRLTEQQLDWADQNNVIDEAPPPMSCPPRIRRSIRDLPRMPVLNFNVLDEPSNKPTVDHHTILEQSESPRRRLNRGAKPVPRNRMMSFGSSGDEV.

A compositionally biased stretch (polar residues) spans 1–22 (MDDTEGNSSMDSIRNGQSSPLP). Residues 1–30 (MDDTEGNSSMDSIRNGQSSPLPQVTPRLPQ) form a disordered region. In terms of domain architecture, Protein kinase spans 108–355 (FQIDEIIGRG…SRDLLDHPVI (248 aa)). Residues 114-122 (IGRGSFGEV) and Lys-137 contribute to the ATP site. Asp-228 functions as the Proton acceptor in the catalytic mechanism. 2 residues coordinate Mg(2+): Asn-233 and Asp-246. Disordered regions lie at residues 478 to 526 (FDND…GTPR) and 632 to 677 (EPSN…GDEV). Positions 489-499 (ATCSSSNSSAI) are enriched in polar residues. A compositionally biased stretch (basic and acidic residues) spans 638–652 (TVDHHTILEQSESPR).

The protein belongs to the protein kinase superfamily. Ser/Thr protein kinase family. WEE1 subfamily.

Its subcellular location is the golgi apparatus membrane. The protein localises to the cytoplasm. The enzyme catalyses L-seryl-[protein] + ATP = O-phospho-L-seryl-[protein] + ADP + H(+). The catalysed reaction is L-threonyl-[protein] + ATP = O-phospho-L-threonyl-[protein] + ADP + H(+). In terms of biological role, acts as a negative regulator of entry into mitosis (G2 to M transition) by phosphorylation of the CDK1 kinase during oocyte maturation. Required for oocyte maturation, embryonic development, germline proliferation and initiation of meiosis during spermatogenesis. Required for chromosome structure during mitosis and negative regulation of nuclear envelope breakdown. The polypeptide is Membrane-associated tyrosine- and threonine-specific cdc2-inhibitory kinase wee-1.3 (wee-1.3) (Caenorhabditis elegans).